The primary structure comprises 530 residues: GATA zinc finger domain-containing protein 4 (530 aa).

Disordered stretches follow at residues 1–27 (MSIN…FWDN) and 212–386 (STVV…INNN). Composition is skewed to low complexity over residues 7–17 (NNNKNNNNKNN), 216–290 (SNSP…FNNN), and 299–386 (NSNN…INNN). Residues 494–518 (CSMCNIKESISWIKTMVNGQLCNAC) form a GATA-type zinc finger.

The chain is GATA zinc finger domain-containing protein 4 (gtaD) from Dictyostelium discoideum (Social amoeba).